The chain runs to 1040 residues: Multidrug resistance protein MdtB (1040 aa).

12 helical membrane passes run 16–36 (FILR…AGLV), 342–362 (DVQF…YLFL), 373–393 (IAVP…GFSV), 396–416 (LTLM…IVVI), 440–460 (IGFT…PLLF), 472–492 (FAVT…TLTP), 537–557 (WITL…YIVI), 865–885 (STIW…GVLY), 888–908 (FIHP…ALLA), 911–931 (ISGS…IGIV), 968–988 (ILMT…STGV), and 1002–1022 (GGLV…YLLF).

It belongs to the resistance-nodulation-cell division (RND) (TC 2.A.6) family. MdtB subfamily. Part of a tripartite efflux system composed of MdtA, MdtB and MdtC. MdtB forms a heteromultimer with MdtC.

The protein localises to the cell inner membrane. The chain is Multidrug resistance protein MdtB from Musicola paradisiaca (strain Ech703) (Dickeya paradisiaca).